Reading from the N-terminus, the 221-residue chain is Germin-like protein subfamily 1 member 19 (221 aa).

Residues 1–21 (MKVSMSLILITLSALVTIAKA) form the signal peptide. Cysteines 31 and 48 form a disulfide. The Cupin type-1 domain occupies 76–213 (SNVTTVNVDQ…AFQLDVNVVK (138 aa)). N-linked (GlcNAc...) asparagine glycosylation occurs at Asn77. 4 residues coordinate Mn(2+): His110, His112, Glu117, and His159.

Belongs to the germin family. In terms of assembly, oligomer (believed to be a pentamer but probably hexamer).

The protein resides in the secreted. It is found in the extracellular space. Its subcellular location is the apoplast. Functionally, may play a role in plant defense. Probably has no oxalate oxidase activity even if the active site is conserved. In Arabidopsis thaliana (Mouse-ear cress), this protein is Germin-like protein subfamily 1 member 19.